Reading from the N-terminus, the 614-residue chain is Maltose permease MAL31 (614 aa).

Residues 1-48 (MKGLSSLINRKKDRNDSHLDEIENGVNATEFNSIEMEEQGKKSDFDLS) form a disordered region. Residues 1–108 (MKGLSSLINR…AAAWSLLVST (108 aa)) are Cytoplasmic-facing. Residues 38-48 (EQGKKSDFDLS) are compositionally biased toward basic and acidic residues. The helical transmembrane segment at 109 to 129 (TLIQEGYDTAILGAFYALPVF) threads the bilayer. Residues 130–144 (QKKYGSLNSNTGDYE) lie on the Extracellular side of the membrane. The helical transmembrane segment at 145–165 (ISVSWQIGLCLCYMAGEIVGL) threads the bilayer. The Cytoplasmic segment spans residues 166–180 (QMTGPSVDYMGNRYT). Residues 181–201 (LIMALFFLAAFIFILYFCKSL) form a helical membrane-spanning segment. Position 202 (G202) is a topological domain, extracellular. A helical transmembrane segment spans residues 203–223 (MIAVGQALCGMPWGCFQCLTV). At 224–236 (SYASEICPLALRY) the chain is on the cytoplasmic side. The chain crosses the membrane as a helical span at residues 237-257 (YLTTYSNLCWAFGQLFAAGIM). The Extracellular segment spans residues 258 to 272 (KNSQNKYANSELGYK). Residues 273 to 293 (LPFALQWIWPLPLAVGIFFAP) traverse the membrane as a helical segment. Residues 294-364 (ESPWWLVKKG…KDGINRRRTR (71 aa)) are Cytoplasmic-facing. The chain crosses the membrane as a helical span at residues 365–385 (IACLCWIGQCSCGASLIGYST). The Extracellular segment spans residues 386–398 (YFYEKAGVSTDTA). A helical transmembrane segment spans residues 399–419 (FTFSIIQYCLGIAATFISWWA). Residues 420-427 (SKYCGRFD) are Cytoplasmic-facing. A helical membrane pass occupies residues 428-448 (LYAFGLAFQAIMFFIIGGLGC). Over 449 to 460 (SDTHGAKMGSGA) the chain is Extracellular. Residues 461 to 481 (LLMVVAFFYNLGIAPVVFCLV) traverse the membrane as a helical segment. Residues 482–493 (SEIPSSRLRTKT) are Cytoplasmic-facing. Residues 494–514 (IILARNAYNVIQVVVTVLIMY) form a helical membrane-spanning segment. The Extracellular portion of the chain corresponds to 515–526 (QLNSEKWNWGAK). Residues 527–547 (SGFFWGGFCLATLAWAVVDLP) traverse the membrane as a helical segment. At 548 to 614 (ETAGRTFIEI…GRNTSSVVNK (67 aa)) the chain is on the cytoplasmic side. A disordered region spans residues 595 to 614 (EDLETSVVDEGRNTSSVVNK).

This sequence belongs to the major facilitator superfamily. Sugar transporter (TC 2.A.1.1) family.

Its subcellular location is the membrane. Functionally, high-affinity uptake of maltose and maltotriose. Also transports turanose but not alpha-methylglucoside, melezitose or trehalose. This chain is Maltose permease MAL31 (MAL31), found in Saccharomyces cerevisiae (strain ATCC 204508 / S288c) (Baker's yeast).